Reading from the N-terminus, the 530-residue chain is Tyrosinase (530 aa).

An N-terminal signal peptide occupies residues 1–17; it reads MLLAALYCLLWSFRTSA. Topologically, residues 19-473 are lumenal, melanosome; it reads HFPRACASSK…IKPYLEQAQR (455 aa). N86 carries an N-linked (GlcNAc...) asparagine glycan. 3 residues coordinate Cu cation: H180, H202, and H211. Residues N230, N290, and N337 are each glycosylated (N-linked (GlcNAc...) asparagine). Cu cation contacts are provided by H363 and H367. An N-linked (GlcNAc...) asparagine glycan is attached at N371. H390 lines the Cu cation pocket. The helical transmembrane segment at 474 to 494 threads the bilayer; the sequence is IWPWLIGAAVVGSVLTAVLGG. The Cytoplasmic portion of the chain corresponds to 495–530; sequence LTSLLCRRKRNQLPEEKQPLLMEKEDYHNLMYQSHL.

It belongs to the tyrosinase family. In terms of assembly, forms an OPN3-dependent complex with DCT in response to blue light in melanocytes. Requires Cu(2+) as cofactor. Glycosylated.

The protein resides in the melanosome membrane. Its subcellular location is the melanosome. It carries out the reaction 2 L-dopa + O2 = 2 L-dopaquinone + 2 H2O. The enzyme catalyses L-tyrosine + O2 = L-dopaquinone + H2O. It catalyses the reaction 2 5,6-dihydroxyindole-2-carboxylate + O2 = 2 indole-5,6-quinone-2-carboxylate + 2 H2O. Functionally, this is a copper-containing oxidase that functions in the formation of pigments such as melanins and other polyphenolic compounds. Catalyzes the initial and rate limiting step in the cascade of reactions leading to melanin production from tyrosine. In addition to hydroxylating tyrosine to DOPA (3,4-dihydroxyphenylalanine), also catalyzes the oxidation of DOPA to DOPA-quinone, and possibly the oxidation of DHI (5,6-dihydroxyindole) to indole-5,6 quinone. This Bos taurus (Bovine) protein is Tyrosinase (TYR).